A 293-amino-acid chain; its full sequence is MPELPEVEVVRRGLAEHVTGRTVTAVRVHHPRAVRRHEAGPADLTARLLDTTITGTGRRGKYLWLTLGDGADEPLARRESNFALVVHLGMSGQMLLGDVPNANHLRIAALLDDGTTLSFVDQRTFGGWMLADLVTVDGSDVPAPVAHIARDPLDPLFDRDAVVKVLRRKHSEIKRQLLDQTVVSGIGNIYADESLWRAKINGARLASGVSRAKLAELLGAAADVMTDALAQGGTSFDSLYVNVNGESGYFDRSLDAYGREGEPCRRCGAIMRRDKFMNRSSFYCPRCQPRPRV.

Pro-2 (schiff-base intermediate with DNA) is an active-site residue. The active-site Proton donor is Glu-3. Lys-61 functions as the Proton donor; for beta-elimination activity in the catalytic mechanism. Residues His-104, Arg-123, and Lys-169 each contribute to the DNA site. An FPG-type zinc finger spans residues 255–289; the sequence is DAYGREGEPCRRCGAIMRRDKFMNRSSFYCPRCQP. The Proton donor; for delta-elimination activity role is filled by Arg-279.

It belongs to the FPG family. Monomer. Requires Zn(2+) as cofactor.

It carries out the reaction Hydrolysis of DNA containing ring-opened 7-methylguanine residues, releasing 2,6-diamino-4-hydroxy-5-(N-methyl)formamidopyrimidine.. The catalysed reaction is 2'-deoxyribonucleotide-(2'-deoxyribose 5'-phosphate)-2'-deoxyribonucleotide-DNA = a 3'-end 2'-deoxyribonucleotide-(2,3-dehydro-2,3-deoxyribose 5'-phosphate)-DNA + a 5'-end 5'-phospho-2'-deoxyribonucleoside-DNA + H(+). Functionally, involved in base excision repair of DNA damaged by oxidation or by mutagenic agents. Acts as a DNA glycosylase that recognizes and removes damaged bases. Has a preference for oxidized purines, such as 7,8-dihydro-8-oxoguanine (8-oxoG). Has AP (apurinic/apyrimidinic) lyase activity and introduces nicks in the DNA strand. Cleaves the DNA backbone by beta-delta elimination to generate a single-strand break at the site of the removed base with both 3'- and 5'-phosphates. This Mycolicibacterium vanbaalenii (strain DSM 7251 / JCM 13017 / BCRC 16820 / KCTC 9966 / NRRL B-24157 / PYR-1) (Mycobacterium vanbaalenii) protein is Formamidopyrimidine-DNA glycosylase.